We begin with the raw amino-acid sequence, 403 residues long: Argininosuccinate synthase (403 aa).

ATP is bound at residue 10-18; the sequence is AYSGGLDTS. Residue Y87 participates in L-citrulline binding. G117 contacts ATP. Residues T119, N123, and D124 each contribute to the L-aspartate site. N123 provides a ligand contact to L-citrulline. Positions 127, 175, 260, and 272 each coordinate L-citrulline.

This sequence belongs to the argininosuccinate synthase family. Type 1 subfamily. Homotetramer.

Its subcellular location is the cytoplasm. The catalysed reaction is L-citrulline + L-aspartate + ATP = 2-(N(omega)-L-arginino)succinate + AMP + diphosphate + H(+). It participates in amino-acid biosynthesis; L-arginine biosynthesis; L-arginine from L-ornithine and carbamoyl phosphate: step 2/3. This chain is Argininosuccinate synthase, found in Bacillus subtilis (strain 168).